The primary structure comprises 492 residues: Probable cobyric acid synthase (492 aa).

Residues 252-444 (PIEVNVVKFS…FHGILENFEF (193 aa)) enclose the GATase cobBQ-type domain. The active-site Nucleophile is the C330. H436 is a catalytic residue.

Belongs to the CobB/CobQ family. CobQ subfamily.

It functions in the pathway cofactor biosynthesis; adenosylcobalamin biosynthesis. Catalyzes amidations at positions B, D, E, and G on adenosylcobyrinic A,C-diamide. NH(2) groups are provided by glutamine, and one molecule of ATP is hydrogenolyzed for each amidation. The polypeptide is Probable cobyric acid synthase (Methanococcus maripaludis (strain DSM 14266 / JCM 13030 / NBRC 101832 / S2 / LL)).